Here is a 581-residue protein sequence, read N- to C-terminus: Threonine--tRNA ligase (581 aa).

The segment at 185–478 (DHRKLGKELD…LIEHYGGAFP (294 aa)) is catalytic. Residues C278, H329, and H455 each contribute to the Zn(2+) site.

Belongs to the class-II aminoacyl-tRNA synthetase family. In terms of assembly, homodimer. Zn(2+) serves as cofactor.

The protein localises to the cytoplasm. The enzyme catalyses tRNA(Thr) + L-threonine + ATP = L-threonyl-tRNA(Thr) + AMP + diphosphate + H(+). In terms of biological role, catalyzes the attachment of threonine to tRNA(Thr) in a two-step reaction: L-threonine is first activated by ATP to form Thr-AMP and then transferred to the acceptor end of tRNA(Thr). Also edits incorrectly charged L-seryl-tRNA(Thr). In Borreliella afzelii (strain PKo) (Borrelia afzelii), this protein is Threonine--tRNA ligase.